Consider the following 238-residue polypeptide: Uridylate kinase (238 aa).

Lys12–Gly15 provides a ligand contact to ATP. Gly54 lines the UMP pocket. 2 residues coordinate ATP: Gly55 and Arg59. UMP-binding positions include Asp74 and Thr135–Thr142. ATP is bound by residues Thr162, Tyr168, and Asp171.

This sequence belongs to the UMP kinase family. As to quaternary structure, homohexamer.

Its subcellular location is the cytoplasm. It carries out the reaction UMP + ATP = UDP + ADP. It participates in pyrimidine metabolism; CTP biosynthesis via de novo pathway; UDP from UMP (UMPK route): step 1/1. Its activity is regulated as follows. Inhibited by UTP. Functionally, catalyzes the reversible phosphorylation of UMP to UDP. The sequence is that of Uridylate kinase from Herminiimonas arsenicoxydans.